Consider the following 201-residue polypeptide: IMP cyclohydrolase (201 aa).

Belongs to the archaeal IMP cyclohydrolase family.

It catalyses the reaction IMP + H2O = 5-formamido-1-(5-phospho-D-ribosyl)imidazole-4-carboxamide. Its pathway is purine metabolism; IMP biosynthesis via de novo pathway; IMP from 5-formamido-1-(5-phospho-D-ribosyl)imidazole-4-carboxamide: step 1/1. Catalyzes the cyclization of 5-formylamidoimidazole-4-carboxamide ribonucleotide to IMP. This Methanocella arvoryzae (strain DSM 22066 / NBRC 105507 / MRE50) protein is IMP cyclohydrolase.